We begin with the raw amino-acid sequence, 258 residues long: MFAVMKTGGKQYKVQAGDKLRVELLAAEAGEAVQFNEILMLGGDNVTVGAPLVEGAAVQANVIEQVKGAKLIHYVKRRRKHSSQRKKGHRQKLTLIEITDILASGGDKSGMKTAIGAGMVAVAAGAVATAAVVATKAAKKAKDAKDEAPKAAPKAEKKKAAPKKAKAEAAPAAADEGTRPANLLDAARDGKADDLKKISGVGPKLEGLLNENGVYHFDQIMAWGPSEIAYMDDKLSFKGRIERDNWIEQATAFAAEQE.

The segment covering 140 to 159 (KAKDAKDEAPKAAPKAEKKK) has biased composition (basic and acidic residues). Residues 140–181 (KAKDAKDEAPKAAPKAEKKKAAPKKAKAEAAPAAADEGTRPA) form a disordered region.

The protein belongs to the bacterial ribosomal protein bL21 family. In terms of assembly, part of the 50S ribosomal subunit. Contacts protein L20.

Its function is as follows. This protein binds to 23S rRNA in the presence of protein L20. The protein is Large ribosomal subunit protein bL21 of Jannaschia sp. (strain CCS1).